The sequence spans 48 residues: Keratin-associated protein 22-1 (48 aa).

Interacts with hair keratins.

Functionally, in the hair cortex, hair keratin intermediate filaments are embedded in an interfilamentous matrix, consisting of hair keratin-associated proteins (KRTAP), which are essential for the formation of a rigid and resistant hair shaft through their extensive disulfide bond cross-linking with abundant cysteine residues of hair keratins. The matrix proteins include the high-sulfur and high-glycine-tyrosine keratins. In Homo sapiens (Human), this protein is Keratin-associated protein 22-1 (KRTAP22-1).